An 81-amino-acid polypeptide reads, in one-letter code: MKLTCVVIVAVLFLTAWTFVTAVPHSSNALENLYLKARHEMENPEASKLNTRYDCEPPGNFCGMIKIGPPCCSGWCFFACA.

The N-terminal stretch at methionine 1–alanine 22 is a signal peptide. Positions valine 23–arginine 52 are excised as a propeptide. Intrachain disulfides connect cysteine 55–cysteine 72, cysteine 62–cysteine 76, and cysteine 71–cysteine 80. Proline 70 carries the 4-hydroxyproline; partial modification. Tryptophan 75 is subject to 6'-bromotryptophan; partial.

It belongs to the conotoxin O1 superfamily. In terms of processing, txO4 is found with and without hydroxyproline and these two forms have a bromotryptophan. Truncated TxO4 is found with and without bromotryptophan, and these two forms have no hydroxyproline. Expressed by the venom duct.

Its subcellular location is the secreted. Its function is as follows. Omega-conotoxins act at presynaptic membranes, they bind and block voltage-gated calcium channels (Cav). In Conus textile (Cloth-of-gold cone), this protein is Omega-conotoxin-like TxO4.